An 84-amino-acid chain; its full sequence is Small ribosomal subunit protein uS17 (84 aa).

It belongs to the universal ribosomal protein uS17 family. In terms of assembly, part of the 30S ribosomal subunit.

Its function is as follows. One of the primary rRNA binding proteins, it binds specifically to the 5'-end of 16S ribosomal RNA. The sequence is that of Small ribosomal subunit protein uS17 from Vibrio vulnificus (strain CMCP6).